The following is a 488-amino-acid chain: Inosine-5'-monophosphate dehydrogenase (488 aa).

CBS domains lie at 95–153 and 157–216; these read VISN…SIKI and MTKE…AKDE. Residues D250 and 300 to 302 each bind NAD(+); that span reads GIG. K(+) is bound by residues G302 and G304. An IMP-binding site is contributed by S305. Position 307 (C307) interacts with K(+). C307 functions as the Thioimidate intermediate in the catalytic mechanism. Residues 340-342, 363-364, and 387-391 each bind IMP; these read DGG, GS, and YRGMG. R403 acts as the Proton acceptor in catalysis. An IMP-binding site is contributed by E417. The segment at 467–488 is disordered; it reads AGLAESHPHDVQITKESPNYSF. K(+) is bound by residues E471, S472, and H473.

The protein belongs to the IMPDH/GMPR family. As to quaternary structure, homotetramer. It depends on K(+) as a cofactor.

The enzyme catalyses IMP + NAD(+) + H2O = XMP + NADH + H(+). Its pathway is purine metabolism; XMP biosynthesis via de novo pathway; XMP from IMP: step 1/1. Its activity is regulated as follows. Mycophenolic acid (MPA) is a non-competitive inhibitor that prevents formation of the closed enzyme conformation by binding to the same site as the amobile flap. In contrast, mizoribine monophosphate (MZP) is a competitive inhibitor that induces the closed conformation. MPA is a potent inhibitor of mammalian IMPDHs but a poor inhibitor of the bacterial enzymes. MZP is a more potent inhibitor of bacterial IMPDH. In terms of biological role, catalyzes the conversion of inosine 5'-phosphate (IMP) to xanthosine 5'-phosphate (XMP), the first committed and rate-limiting step in the de novo synthesis of guanine nucleotides, and therefore plays an important role in the regulation of cell growth. This is Inosine-5'-monophosphate dehydrogenase from Staphylococcus saprophyticus subsp. saprophyticus (strain ATCC 15305 / DSM 20229 / NCIMB 8711 / NCTC 7292 / S-41).